The following is a 266-amino-acid chain: Putative carbamate hydrolase RutD (266 aa).

It belongs to the AB hydrolase superfamily. Hydrolase RutD family.

The catalysed reaction is carbamate + 2 H(+) = NH4(+) + CO2. In terms of biological role, involved in pyrimidine catabolism. May facilitate the hydrolysis of carbamate, a reaction that can also occur spontaneously. The chain is Putative carbamate hydrolase RutD from Escherichia coli O150:H5 (strain SE15).